A 446-amino-acid polypeptide reads, in one-letter code: Homocitrate synthase, mitochondrial (446 aa).

The span at 1-14 (MCATDNAPAANAAP) shows a compositional bias: low complexity. A disordered region spans residues 1–36 (MCATDNAPAANAAPEKPSNVGVEVGHTGEQTNPYGA). A Pyruvate carboxyltransferase domain is found at 48 to 307 (FQLIESTLRE…HKLRDLENLV (260 aa)). Arginine 56 is a 2-oxoglutarate binding site. Glutamate 57 contributes to the Mg(2+) binding site. Residues histidine 116, arginine 176, and threonine 210 each coordinate 2-oxoglutarate. Positions 237 and 239 each coordinate Mg(2+). The active-site Proton acceptor is the histidine 334. The tract at residues 422-446 (TPTVAATEGPAVEDEPAAKKAKTEE) is disordered. The segment covering 437–446 (PAAKKAKTEE) has biased composition (basic and acidic residues).

Belongs to the alpha-IPM synthase/homocitrate synthase family. Homocitrate synthase LYS20/LYS21 subfamily. Requires Mg(2+) as cofactor. It depends on Mn(2+) as a cofactor.

It is found in the mitochondrion. The enzyme catalyses acetyl-CoA + 2-oxoglutarate + H2O = (2R)-homocitrate + CoA + H(+). It functions in the pathway amino-acid biosynthesis; L-lysine biosynthesis via AAA pathway; L-alpha-aminoadipate from 2-oxoglutarate: step 1/5. Catalyzes the aldol-type condensation of 2-oxoglutarate with acetyl-CoA to yield homocitrate. Carries out the first step of the alpha-aminoadipate (AAA) lysine biosynthesis pathway. This chain is Homocitrate synthase, mitochondrial (LYS1), found in Yarrowia lipolytica (strain CLIB 122 / E 150) (Yeast).